A 262-amino-acid polypeptide reads, in one-letter code: Acyl-[acyl-carrier-protein]--UDP-N-acetylglucosamine O-acyltransferase (262 aa).

This sequence belongs to the transferase hexapeptide repeat family. LpxA subfamily. In terms of assembly, homotrimer.

The protein localises to the cytoplasm. The catalysed reaction is a (3R)-hydroxyacyl-[ACP] + UDP-N-acetyl-alpha-D-glucosamine = a UDP-3-O-[(3R)-3-hydroxyacyl]-N-acetyl-alpha-D-glucosamine + holo-[ACP]. The protein operates within glycolipid biosynthesis; lipid IV(A) biosynthesis; lipid IV(A) from (3R)-3-hydroxytetradecanoyl-[acyl-carrier-protein] and UDP-N-acetyl-alpha-D-glucosamine: step 1/6. Functionally, involved in the biosynthesis of lipid A, a phosphorylated glycolipid that anchors the lipopolysaccharide to the outer membrane of the cell. The protein is Acyl-[acyl-carrier-protein]--UDP-N-acetylglucosamine O-acyltransferase of Enterobacter sp. (strain 638).